Reading from the N-terminus, the 433-residue chain is Tol-Pal system protein TolB (433 aa).

The N-terminal stretch at Met-1–Ala-26 is a signal peptide.

It belongs to the TolB family. As to quaternary structure, the Tol-Pal system is composed of five core proteins: the inner membrane proteins TolA, TolQ and TolR, the periplasmic protein TolB and the outer membrane protein Pal. They form a network linking the inner and outer membranes and the peptidoglycan layer.

The protein resides in the periplasm. Functionally, part of the Tol-Pal system, which plays a role in outer membrane invagination during cell division and is important for maintaining outer membrane integrity. In Burkholderia pseudomallei (strain 1710b), this protein is Tol-Pal system protein TolB.